Here is a 71-residue protein sequence, read N- to C-terminus: UPF0434 protein Csal_1588 (71 aa).

The protein belongs to the UPF0434 family.

This is UPF0434 protein Csal_1588 from Chromohalobacter salexigens (strain ATCC BAA-138 / DSM 3043 / CIP 106854 / NCIMB 13768 / 1H11).